We begin with the raw amino-acid sequence, 2471 residues long: MEKVHVDLDADSPYVKSLQKCFPHFEIEATQVTDNDHANARAFSHLATKLIESEVDPDQVILDIGSAPVRHTHSKHKYHCICPMISAEDPDRLHRYADKLRKSDVTDRFIASKAADLLTVMSTPDVETPSLCMHTDSTCRYHGTVAVYQDVYAVHAPTSIYHQALKGVRTIYWIGFDTTPFMYKNMAGAYPTYNTNWADESVLEARNIGLCSSDLHEQRFGKISIMRKKKLQPTNKVVFSVGSTIYTEERILLRSWHLPNVFHLKGKTSFTGRCNTIVSCEGYVVKKITISPGIYGKVDNLASTMHREGFLSCKVTDTLRGERVSFPVCTYVPATLCDQMTGILATDVSVDDAQKLLVGLNQRIVVNGRTQRNTNTMPNYLLPIVAQAFSRWAREYHADLEDEKDLGVRERSLVMGCCWAFKTHKITSIYKKPGTQTTKKVPAVFNSFVVPQLTSYGLDIELRRRIKMLLEEKKKPAPIITEADVAHLKGMQEEAEVVAEAEAIRAALPPLLPEVERETVEADIDLIMQEAGAGSVETPRRHIKVTTYPGEEMIGSYAVLSPQAVLNSEKLACIHPLAEQVLVMTHKGRAGRYKVEPYHGRVIVPSGTAIPIPDFQALSESATIVYNEREFVNRYLHHIAINGGALNTDEEYYKVLRSGEAESEYVFDIDAKKCVKKAEAGPMCLVGDLVDPPFHEFAYESLKTRPAAPHKVPTIGVYGVPGSGKSGIIKSAVTKRDLVVSAKKENCTEIIKDVKRMRGMDVAARTVDSVLLNGVKHPVDTLYIDEAFACHAGTLLALIAIVKPKKVVLCGDPKQCGFFNMMCLKVHFNHEICTEVYHKSISRRCTRTVTAIVSTLFYDKRMRTVNPCSDKIIIDTTSTTKPLKDDIILTCFRGWVKQLQIDYKNHEIMTAAASQGLTRKGVYAVRYKVNENPLYAQTSEHVNVLLTRTEKRIVWKTLAGDPWIKTLTAHYPGEFSATLEEWQAEHDAIMKRVLETPANSDVYQNKVHVCWAKALEPVLATANITLTRSQWETIPAFKDDKAFSPEMALNFLCTRFFGVDIDSGLFSAPTVPLTYTNEHWDNSPGPNRYGLCMRTAKELARRYPCILKAVDTGRVADVRTNTIRDYNPMINVVPLNRRLPHSLVVSHRYTGDGNYSQLLSKLTGKTILVIGTPINVPGKRVETLGPGPQCTYKADLDLGIPSMIGKYDIIFVNVRTPYKHHHYQQCEDHAIHHSMLTRKAVDHLNKGGTCVALGYGTADRATENIISAVARSFRFSRVCQPKCAWENTEVAFVFFGKDNGNHLRDQDQLSVVLNNIYQGSTQYEAGRAPAYRVIRGDISKSTDEVIVNAANNKGQPGAGVCGALYKKWPGAFDKAPIATGTAHLVKHTPNIIHAVGPNFSRMSEVEGNQKLSEVYMDIAKIINKERYNKVSIPLLSTGVYAGGKDRVMQSLNHLFTAMDTTDADVTIYCLDKQWETRIKDAIARKESVEELVEDDKPVDIELVRVHPQSSLVGRPGYSTNEGKVHSYLEGTRFHQTAKDIAEIYAMWPNKQEANEQICLYVLGESMTSIRSKCPVEESEASSPPHTIPCLCNYAMTAERVYRLRMAKNEQFAVCSSFQLPKYRITGVQKIQCNKPVIFSGVVPPAIHPRKFSTVEETQPTTIAERLIPRRPAPPVPVPARIPSPRCSPAVSMQSLGGSSTSEVIISEAEVHDSDSDCSIPPMPFVVEAEVHASQGSQWSIPSASGFEIREPLDDLGSITRTPAISDHSVDLITFDSVTDIFENFKQAPFQFLSDIRPIPAPRRRREPETDIQRFDKSEEKPVPKPRTRTAKYKKPPGVARSISEAELDEFIRRHSNXRYEAGAYIFSSETGQGHLQQKSTRQCKLQHPILERSVHEKFYAPRLDLEREKLLQRKLQLCASEGNRSRYQSRKVENMKAITAERLLQGIGAYLSAEPQPVECYKINYPVPVYSTTRSNRFSSADVAVRVCNLVMQENFPTVASYTITDEYDAYLDMVDGASCCLDTATFCPAKLRSFPKKHSYLKPEIRSAVPSPIQNTLQNVLAAATKRNCNVTQMRELPVLDSAAFNVECFKKYACNDEYWETFKNNPIRLTTENVTQYVTKLKGPKAAALFAKTHNLQPLHEIPMDRFVMDLKRDVKVTPGTKHTEERPKVQVIQAADPLATAYLCGIHRELVRRLNAVLLPNIHTLFDMSAEDFDAIIAEHFQFGDAVLETDIASFDKSEDDAIAMSALMILEDLGVDQALLDLIEAAFGNITSVHLPTGTRFKFGAMMKSGMFLTLFINTVVNIMIASRVLRERLTNSPCAAFIGDDNIVKGVKSDALMAERCATWLNMEVKIIDAVVGVKAPYFCGGFIVVDQITGTACRVADPLKRLFKLGKPLPLDDDQDGDRRRALYDEALRWNRIGITDELVKAVESRYDVLYISLVITALSTLAATVSNFKHIRGNPITLYG.

The Alphavirus-like MT domain occupies 28–257 (EATQVTDNDH…EERILLRSWH (230 aa)). The interval 242–261 (GSTIYTEERILLRSWHLPNV) is nsP1 membrane-binding. Cys-417 is lipidated: S-palmitoyl cysteine; by host. The (+)RNA virus helicase ATP-binding domain occupies 688–839 (DLVDPPFHEF…HEICTEVYHK (152 aa)). 719–726 (GVPGSGKS) is an a ribonucleoside 5'-triphosphate binding site. A (+)RNA virus helicase C-terminal domain is found at 840-988 (SISRRCTRTV…LEEWQAEHDA (149 aa)). The Peptidase C9 domain occupies 1001-1320 (DVYQNKVHVC…VVLNNIYQGS (320 aa)). The tract at residues 1002-1021 (VYQNKVHVCWAKALEPVLAT) is nucleolus localization signal. The active-site For cysteine protease nsP2 activity is the Cys-1010. Residues 1054 to 1063 (TRFFGVDIDS) carry the Nuclear export signal motif. His-1079 functions as the For cysteine protease nsP2 activity in the catalytic mechanism. The Nuclear localization signal signature appears at 1177-1181 (PGKRV). Positions 1328–1486 (APAYRVIRGD…RIKDAIARKE (159 aa)) constitute a Macro domain. ADP-D-ribose is bound by residues Asp-1337, Asn-1351, Gly-1359, Gly-1438, Val-1439, and Tyr-1440. Residues Cys-1589, Cys-1591, Cys-1614, and Cys-1632 each contribute to the Zn(2+) site. The disordered stretch occupies residues 1669 to 1692 (RRPAPPVPVPARIPSPRCSPAVSM). Residues 1670-1681 (RPAPPVPVPARI) show a composition bias toward pro residues. The tract at residues 1771-1783 (LITFDSVTDIFEN) is binding to host G3BP family members. The segment at 1798-1838 (IPAPRRRREPETDIQRFDKSEEKPVPKPRTRTAKYKKPPGV) is disordered. Basic and acidic residues predominate over residues 1805–1822 (REPETDIQRFDKSEEKPV). Residues 1823–1834 (PKPRTRTAKYKK) are compositionally biased toward basic residues. A binding to host FXR family members region spans residues 1835–1851 (PPGVARSISEAELDEFI). A RdRp catalytic domain is found at 2228–2343 (DAVLETDIAS…KGVKSDALMA (116 aa)).

In terms of assembly, interacts with non-structural protein 3. Interacts with RNA-directed RNA polymerase nsP4. Interacts with protease nsP2. interacts with itself. Interacts with mRNA-capping enzyme nsP1. Interacts with host DDX1. Interacts with host DDX3. Interacts (via C-terminus) with host FXR1; this interaction inhibits the formation of host stress granules on viral mRNAs and the nsp3-FXR1 complexes bind viral RNAs and probably orchestrate the assembly of viral replication complexes. Interacts (via C-terminus) with host FXR2; this interaction inhibits the formation of host stress granules on viral mRNAs and the nsp3-FXR2 complexes bind viral RNAs and probably orchestrate the assembly of viral replication complexes. Interacts (via C-terminus) with host FMR1; this interaction inhibits the formation of host stress granules on viral mRNAs and the nsp3-FMR1 complexes bind viral RNAs and probably orchestrate the assembly of viral replication complexes. Interacts (via C-terminus) with host G3BP1; this interaction inhibits the formation of host stress granules on viral mRNAs and the nsp3-G3BP1 complexes bind viral RNAs and probably orchestrate the assembly of viral replication complexes. Interacts (via C-terminus) with host G3BP2; this interaction inhibits the formation of host stress granules on viral mRNAs and the nsp3-G3BP2 complexes bind viral RNAs and probably orchestrate the assembly of viral replication complexes. As to quaternary structure, interacts with mRNA-capping enzyme nsP1. Interacts with protease nsP2. interacts with itself. In terms of assembly, interacts with RNA-directed RNA polymerase nsP4. Interacts with mRNA-capping enzyme nsP1. Interacts with KPNA1/karyopherin-alpha1; this interaction probably allows the active transport of protease nsP2 into the host nucleus. Mg(2+) serves as cofactor. Requires Mn(2+) as cofactor. Specific enzymatic cleavages in vivo yield mature proteins. The processing of the polyprotein is temporally regulated. In early stages (1.7 hpi), P1234 is first cleaved in trans through its nsP2 protease activity, releasing P123' and nsP4, which associate to form the early replication complex. At the same time, P1234 is also cut at the nsP1/nsP2 site early in infection but with lower efficiency. After replication of the viral minus-strand RNAs (4 hpi), the polyproteins are cut at the nsP1/nsP2 and nsP2/nsP3 sites very efficiently, preventing accumulation of P123' and P1234 and allowing the formation of the late replication complex. NsP3'/nsP4 site is not cleaved anymore and P34 is produced rather than nsP4. Post-translationally, specific enzymatic cleavages in vivo yield mature proteins. The processing of the polyprotein is temporally regulated. In early stages (1.7 hpi), P123 is cleaved at the nsP1/nsP2 site with low efficiency. After replication of the viral minus-strand RNAs (4 hpi), the polyproteins are cut at the nsP1/nsP2 and nsP2/nsP3 sites very efficiently, preventing accumulation of P123 and allowing the formation of the late replication complex. In terms of processing, specific enzymatic cleavages in vivo yield mature proteins. The processing of the polyprotein is temporally regulated. In early stages (1.7 hpi), P123' is cleaved at the nsP1/nsP2 site with low efficiency. After replication of the viral minus-strand RNAs (4 hpi), the polyproteins are cut at the nsP1/nsP2 and nsP2/nsP3 sites very efficiently, preventing accumulation of P123' and allowing the formation of the late replication complex. Palmitoylated by host palmitoyltransferases ZDHHC2 and ZDHHC19. Post-translationally, phosphorylated by host on serines and threonines. In terms of processing, ubiquitinated; targets the protein for rapid degradation via the ubiquitin system. Nsp4 is present in extremely low quantities due to low frequency of translation through the amber stop-codon and the degradation by the ubiquitin pathway.

It is found in the host cytoplasmic vesicle membrane. It localises to the host cell membrane. The protein resides in the host cell projection. The protein localises to the host filopodium. Its subcellular location is the host nucleus. It is found in the host cytoplasm. The enzyme catalyses GTP + S-adenosyl-L-methionine = N(7)-methyl-GTP + S-adenosyl-L-homocysteine. It catalyses the reaction N(7)-methyl-GTP + L-histidyl-[protein] = N(tele)-(N(7)-methylguanosine 5'-phospho)-L-histidyl-[protein] + diphosphate. It carries out the reaction N(tele)-(N(7)-methylguanosine 5'-phospho)-L-histidyl-[protein] + a 5'-end diphospho-(purine-ribonucleoside) in mRNA + H(+) = a 5'-end (N(7)-methyl 5'-triphosphoguanosine)-(purine-ribonucleoside) in mRNA + L-histidyl-[protein]. The catalysed reaction is a 5'-end triphospho-ribonucleoside in mRNA + H2O = a 5'-end diphospho-ribonucleoside in mRNA + phosphate + H(+). The enzyme catalyses a ribonucleoside 5'-triphosphate + H2O = a ribonucleoside 5'-diphosphate + phosphate + H(+). It catalyses the reaction ATP + H2O = ADP + phosphate + H(+). It carries out the reaction RNA(n) + a ribonucleoside 5'-triphosphate = RNA(n+1) + diphosphate. The catalysed reaction is 4-O-(ADP-D-ribosyl)-L-aspartyl-[protein] + H2O = L-aspartyl-[protein] + ADP-D-ribose + H(+). The enzyme catalyses 5-O-(ADP-D-ribosyl)-L-glutamyl-[protein] + H2O = L-glutamyl-[protein] + ADP-D-ribose + H(+). It catalyses the reaction RNA(n) + ATP = RNA(n)-3'-adenine ribonucleotide + diphosphate. It carries out the reaction ADP-alpha-D-ribose 1''-phosphate + H2O = ADP-D-ribose + phosphate. Inhibited by sinefungin. Its function is as follows. Inactive precursor of the viral replicase, which is activated by cleavages carried out by the viral protease nsP2. The early replication complex formed by the polyprotein P123 and nsP4 synthesizes the minus-strand RNAs (antigenome). Polyprotein P123 is a short-lived polyprotein that accumulates during early stage of infection. As soon P123 is cleaved into mature proteins, the plus-strand RNAs synthesis begins. Functionally, the early replication complex formed by the polyprotein P123' and nsP4 synthesizes minus-strand RNAs (antigenome). Polyprotein P123' is a short-lived polyprotein that accumulates during early stage of infection. As soon P123' is cleaved into mature proteins, the plus-strand RNAs synthesis begins. In terms of biological role, cytoplasmic capping enzyme that catalyzes two virus-specific reactions: methyltransferase and nsP1 guanylyltransferase. mRNA-capping is necessary since all viral RNAs are synthesized in the cytoplasm, and host capping enzymes are restricted to the nucleus. The enzymatic reaction involves a covalent link between 7-methyl-GMP and nsP1, whereas eukaryotic capping enzymes form a covalent complex only with GMP. NsP1 capping consists in the following reactions: GTP is first methylated into 7-methyl-GMP and then is covalently linked to nsP1 to form the m7GMp-nsP1 complex from which 7-methyl-GMP complex is transferred to the mRNA to create the cap structure. NsP1 is also needed for the initiation of the minus-strand RNAs synthesis. Probably serves as a membrane anchor for the replication complex composed of nsP1-nsP4. Nsp1 is needed for the initiation of the minus-strand RNAs synthesis. Palmitoylated nsP1 is remodeling host cell cytoskeleton, and induces filopodium-like structure formation at the surface of the host cell. Its function is as follows. Multifunctional protein whose N-terminus is part of the RNA polymerase complex and displays NTPase, RNA triphosphatase and helicase activities. NTPase and RNA triphosphatase are involved in viral RNA capping and helicase keeps a check on the dsRNA replication intermediates. The C-terminus harbors a protease that specifically cleaves the polyproteins and releases the mature proteins. Required for the shutoff of minus-strand RNAs synthesis. Inhibits host translation to ensure maximal viral gene expression and evade host immune response. Seems to be essential for minus-strand RNAs and subgenomic 26S mRNAs synthesis. Displays mono-ADP-ribosylhydrolase activity. ADP-ribosylation is a post-translational modification that controls various processes of the host cell and the virus probably needs to revert it for optimal viral replication. Binds proteins of FXR and G3BP families and sequesters them into the viral RNA replication complexes thereby inhibiting the formation of host stress granules on viral mRNAs. The nsp3-FXR and nsp3-G3BP complexes bind viral RNAs and probably orchestrate the assembly of viral replication complexes, thanks to the ability of G3BP and FXR family members to self-assemble and bind DNA. Functionally, seems to be essential for minus-strand RNAs and subgenomic 26S mRNAs synthesis. Displays mono-ADP-ribosylhydrolase activity. ADP-ribosylation is a post-translational modification that controls various processes of the host cell and the virus probably needs to revert it for optimal viral replication. Binds proteins of FXR and G3BP families and sequesters them into the viral RNA replication complexes thereby inhibiting the formation of host stress granules on viral mRNAs. The nsp3'-FXR and nsp3-G3BP complexes bind viral RNAs and probably orchestrate the assembly of viral replication complexes, thanks to the ability of G3BP and FXR family members to self-assemble and bind DNA. In terms of biological role, RNA dependent RNA polymerase. Replicates genomic and antigenomic RNA by recognizing replications specific signals. The early replication complex formed by the polyprotein P123 and nsP4 synthesizes minus-strand RNAs. The late replication complex composed of fully processed nsP1-nsP4 is responsible for the production of genomic and subgenomic plus-strand RNAs. The sequence is that of Polyprotein P1234 from Eastern equine encephalitis virus (strain PE-0.0155) (EEEV).